A 149-amino-acid chain; its full sequence is uncharacterized protein (149 aa).

Positions 130–144 (ESNVTKENIEIKEEK) are enriched in basic and acidic residues. The interval 130–149 (ESNVTKENIEIKEEKEENSE) is disordered.

This is an uncharacterized protein from Methanocaldococcus jannaschii (strain ATCC 43067 / DSM 2661 / JAL-1 / JCM 10045 / NBRC 100440) (Methanococcus jannaschii).